We begin with the raw amino-acid sequence, 127 residues long: Protein ApaG (127 aa).

One can recognise an ApaG domain in the interval 3-127; sequence ESEKYRIEVE…FMLAMPRVLH (125 aa).

The polypeptide is Protein ApaG (Aromatoleum aromaticum (strain DSM 19018 / LMG 30748 / EbN1) (Azoarcus sp. (strain EbN1))).